We begin with the raw amino-acid sequence, 658 residues long: Threonine--tRNA ligase (658 aa).

Residues 1 to 64 (MLNSVSLTFP…GKSGKVEIIT (64 aa)) enclose the TGS domain. Positions 246–549 (DHRKLGREMD…LIENYSGHFP (304 aa)) are catalytic. Residues C343, H394, and H526 each coordinate Zn(2+).

This sequence belongs to the class-II aminoacyl-tRNA synthetase family. As to quaternary structure, homodimer. Requires Zn(2+) as cofactor.

It localises to the cytoplasm. It catalyses the reaction tRNA(Thr) + L-threonine + ATP = L-threonyl-tRNA(Thr) + AMP + diphosphate + H(+). In terms of biological role, catalyzes the attachment of threonine to tRNA(Thr) in a two-step reaction: L-threonine is first activated by ATP to form Thr-AMP and then transferred to the acceptor end of tRNA(Thr). Also edits incorrectly charged L-seryl-tRNA(Thr). In Mesorhizobium japonicum (strain LMG 29417 / CECT 9101 / MAFF 303099) (Mesorhizobium loti (strain MAFF 303099)), this protein is Threonine--tRNA ligase.